Reading from the N-terminus, the 161-residue chain is 2-C-methyl-D-erythritol 2,4-cyclodiphosphate synthase (161 aa).

A divalent metal cation contacts are provided by Asp-11 and His-13. Residues 11–13 (DIH) and 37–38 (HS) each bind 4-CDP-2-C-methyl-D-erythritol 2-phosphate. Position 45 (His-45) interacts with a divalent metal cation. 4-CDP-2-C-methyl-D-erythritol 2-phosphate-binding positions include 59–61 (DIG), 135–138 (TTNE), and Arg-145.

This sequence belongs to the IspF family. As to quaternary structure, homotrimer. The cofactor is a divalent metal cation.

The catalysed reaction is 4-CDP-2-C-methyl-D-erythritol 2-phosphate = 2-C-methyl-D-erythritol 2,4-cyclic diphosphate + CMP. It participates in isoprenoid biosynthesis; isopentenyl diphosphate biosynthesis via DXP pathway; isopentenyl diphosphate from 1-deoxy-D-xylulose 5-phosphate: step 4/6. In terms of biological role, involved in the biosynthesis of isopentenyl diphosphate (IPP) and dimethylallyl diphosphate (DMAPP), two major building blocks of isoprenoid compounds. Catalyzes the conversion of 4-diphosphocytidyl-2-C-methyl-D-erythritol 2-phosphate (CDP-ME2P) to 2-C-methyl-D-erythritol 2,4-cyclodiphosphate (ME-CPP) with a corresponding release of cytidine 5-monophosphate (CMP). In Thermosynechococcus vestitus (strain NIES-2133 / IAM M-273 / BP-1), this protein is 2-C-methyl-D-erythritol 2,4-cyclodiphosphate synthase.